The chain runs to 466 residues: Rho GTPase-activating protein 1 (466 aa).

Disordered regions lie at residues Met1–Tyr31 and Glu65–Gly84. Residues Pro8 to Tyr31 are compositionally biased toward low complexity. Over residues Glu65–Ser74 the composition is skewed to basic and acidic residues. Residues Ile117–Thr130 form the CRIB domain. Residues Val162–Arg342 form the Rho-GAP domain. Residues Pro354–Leu402 form a disordered region. Polar residues-rich tracts occupy residues His363–Glu376 and Ser383–Glu397.

In terms of biological role, acts as a GTPase activator for the Rac-type GTPase by converting it to an inactive GDP-bound state. The sequence is that of Rho GTPase-activating protein 1 (ROPGAP1) from Arabidopsis thaliana (Mouse-ear cress).